A 1366-amino-acid chain; its full sequence is DNA-directed RNA polymerase subunit beta' (1366 aa).

Residues 1–20 show a composition bias toward basic residues; sequence MTSSKPKKTSRVRKTTKNSK. Positions 1-34 are disordered; it reads MTSSKPKKTSRVRKTTKNSKKNNPLTMPALAKTP. C248, C315, C322, and C325 together coordinate Zn(2+). The interval 1291-1366 is disordered; that stretch reads YTVDMPQSPS…LQEEGLLSDE (76 aa). Polar residues predominate over residues 1295–1305; sequence MPQSPSVSSTA. Residues 1354–1366 are compositionally biased toward low complexity; the sequence is LEGLQEEGLLSDE.

The protein belongs to the RNA polymerase beta' chain family. RpoC2 subfamily. In cyanobacteria the RNAP catalytic core is composed of 2 alpha, 1 beta, 1 beta', 1 gamma and 1 omega subunit. When a sigma factor is associated with the core the holoenzyme is formed, which can initiate transcription. Zn(2+) is required as a cofactor.

It carries out the reaction RNA(n) + a ribonucleoside 5'-triphosphate = RNA(n+1) + diphosphate. In terms of biological role, DNA-dependent RNA polymerase catalyzes the transcription of DNA into RNA using the four ribonucleoside triphosphates as substrates. This is DNA-directed RNA polymerase subunit beta' from Prochlorococcus marinus (strain MIT 9301).